Here is a 232-residue protein sequence, read N- to C-terminus: Orotate phosphoribosyltransferase (232 aa).

Residues R107, K108, K111, H113, and 133 to 141 (EDLTTAGGS) contribute to the 5-phospho-alpha-D-ribose 1-diphosphate site. T137 contacts orotate.

Belongs to the purine/pyrimidine phosphoribosyltransferase family. PyrE subfamily. Homodimer. Mg(2+) serves as cofactor.

The enzyme catalyses orotidine 5'-phosphate + diphosphate = orotate + 5-phospho-alpha-D-ribose 1-diphosphate. Its pathway is pyrimidine metabolism; UMP biosynthesis via de novo pathway; UMP from orotate: step 1/2. Its function is as follows. Catalyzes the transfer of a ribosyl phosphate group from 5-phosphoribose 1-diphosphate to orotate, leading to the formation of orotidine monophosphate (OMP). This is Orotate phosphoribosyltransferase from Rhizobium rhizogenes (strain K84 / ATCC BAA-868) (Agrobacterium radiobacter).